The sequence spans 33 residues: MSDINATRLPIWGIGCNPSVGDEVTALLASGEA.

The propeptide occupies 1-10 (MSDINATRLP). Residue Ile11 is modified to (3R,4R)-4,5-dihydroxyisoleucine; in form alpha-amanitin. Position 11 is a (3R,4S)-4-hydroxyisoleucine; in form gamma-amanitin (Ile11). A cross-link (cyclopeptide (Ile-Pro)) is located at residues 11-18 (IWGIGCNP). Positions 12-16 (WGIGC) form a cross-link, 2'-cysteinyl-6'-hydroxytryptophan sulfoxide (Trp-Cys). Position 18 is a 4-hydroxyproline (Pro18). Positions 19–33 (SVGDEVTALLASGEA) are excised as a propeptide.

Belongs to the MSDIN fungal toxin family. In terms of processing, processed by the macrocyclase-peptidase enzyme POPB to yield a toxic cyclic decapeptide. POPB first removes 10 residues from the N-terminus. Conformational trapping of the remaining peptide forces the enzyme to release this intermediate rather than proceed to macrocyclization. The enzyme rebinds the remaining peptide in a different conformation and catalyzes macrocyclization of the N-terminal 8 residues.

Its function is as follows. Major toxin belonging to the bicyclic octapeptides amatoxins that acts by binding non-competitively to RNA polymerase II and greatly slowing the elongation of transcripts from target promoters. This is Alpha-amanitin proprotein from Amanita rimosa.